Here is a 444-residue protein sequence, read N- to C-terminus: Ubiquitin carboxyl-terminal hydrolase MINDY-3 (444 aa).

C51 acts as the Nucleophile in catalysis. At S124 the chain carries Phosphoserine. The active-site Proton acceptor is the H286.

Belongs to the MINDY deubiquitinase family. FAM188 subfamily. Interacts with COPS5.

The protein resides in the nucleus. The enzyme catalyses Thiol-dependent hydrolysis of ester, thioester, amide, peptide and isopeptide bonds formed by the C-terminal Gly of ubiquitin (a 76-residue protein attached to proteins as an intracellular targeting signal).. In terms of biological role, hydrolase that can remove 'Lys-48'-linked conjugated ubiquitin from proteins. This chain is Ubiquitin carboxyl-terminal hydrolase MINDY-3, found in Mus musculus (Mouse).